We begin with the raw amino-acid sequence, 415 residues long: Stimulator of interferon genes protein (415 aa).

The region spanning 29 to 163 is the TIR domain; sequence HVYHAFISYC…DIIQAISKPE (135 aa). E104 is an active-site residue. Residue R256 coordinates 2',3'-cGAMP. The segment at 387-415 is disordered; it reads KSPSSTNMVKSEPNIYREESGKTKSVERG. Positions 401 to 415 are enriched in basic and acidic residues; sequence IYREESGKTKSVERG.

In the N-terminal section; belongs to the Toll-like receptor family. This sequence in the C-terminal section; belongs to the TMEM173 family. In terms of assembly, homodimer.

It carries out the reaction NAD(+) + H2O = ADP-D-ribose + nicotinamide + H(+). Its function is as follows. Sensor of cytosolic DNA from bacteria and viruses that promotes autophagy. Binds c-di-AMP, 2'3'-cGAMP, 3'3'-cGAMP and to a lesser extent c-di-GMP. Nucleotide binding has not been seen to stimulate NAD(+) hydrolase activity. The polypeptide is Stimulator of interferon genes protein (Magallana gigas (Pacific oyster)).